The chain runs to 1928 residues: Lactase/phlorizin hydrolase (1928 aa).

An N-terminal signal peptide occupies residues 1 to 21 (MELPWTALFLSTVLLGLSCQG). A propeptide spans 22–867 (SDWESDRNFI…LPVRADFTSR (846 aa)) (XBetaGly). At 22–1883 (SDWESDRNFI…LMLGIAEAQT (1862 aa)) the chain is on the extracellular side. Residues 46–289 (NYPPGKQGSD…FIYTLKLEDC (244 aa)) form a glycosyl hydrolase-1 1; Region I region. The tract at residues 364–856 (VWAAFANQSR…GFSAKKVKRN (493 aa)) is glycosyl hydrolase-1 2; Region II. N-linked (GlcNAc...) asparagine glycosylation is found at asparagine 370, asparagine 514, asparagine 824, asparagine 936, asparagine 948, asparagine 991, and asparagine 1037. Residues 904–1367 (RFRDDFLWGV…DLIANNGMPL (464 aa)) are glycosyl hydrolase-1 3; Region III. Phlorizin hydrolase/Glycosylceramidase activity. Glutamate 1067 (proton donor; for phlorizin hydrolase/Glycosylceramidase activity) is an active-site residue. Asparagine 1176 and asparagine 1240 each carry an N-linked (GlcNAc...) asparagine glycan. Catalysis depends on glutamate 1274, which acts as the Nucleophile; for phlorizin hydrolase/Glycosylceramidase activity. 2 N-linked (GlcNAc...) asparagine glycosylation sites follow: asparagine 1281 and asparagine 1509. The segment at 1374-1847 (LYGEFPKGFI…CNGFPDPAQG (474 aa)) is glycosyl hydrolase-1 4; Region IV. Lactase activity. Glutamate 1539 serves as the catalytic Proton donor; for lactase activity. 2 N-linked (GlcNAc...) asparagine glycosylation sites follow: asparagine 1657 and asparagine 1684. The Nucleophile; for lactase activity role is filled by glutamate 1750. Asparagine 1762 and asparagine 1815 each carry an N-linked (GlcNAc...) asparagine glycan. The helical transmembrane segment at 1884–1902 (ALYVLFALLLLGACSLAFL) threads the bilayer. At 1903–1928 (TYNTGRRSKQGNAQPSQHQLSPISSF) the chain is on the cytoplasmic side.

Belongs to the glycosyl hydrolase 1 family. In terms of assembly, homodimer. Post-translationally, N-glycosylated. As to expression, intestine.

It is found in the apical cell membrane. It catalyses the reaction lactose + H2O = beta-D-galactose + D-glucose. The catalysed reaction is phlorizin + H2O = phloretin + beta-D-glucose. It carries out the reaction D-cellobiose + H2O = beta-D-glucose + D-glucose. The enzyme catalyses quercetin 4'-O-beta-D-glucoside + H2O = quercetin + beta-D-glucose. It catalyses the reaction quercetin 3-O-beta-D-glucoside + H2O = quercetin + beta-D-glucose. The catalysed reaction is kaempferol 3-O-beta-D-glucoside + H2O = kaempferol + beta-D-glucose. It carries out the reaction luteolin 7-O-beta-D-glucoside + H2O = luteolin + beta-D-glucose. The enzyme catalyses luteolin 4'-O-beta-D-glucoside + H2O = luteolin + beta-D-glucose. It catalyses the reaction (2S)-naringenin 7-O-beta-D-glucoside + H2O = (2S)-naringenin + beta-D-glucose. The catalysed reaction is eriodictyol-7-O-beta-D-glucoside + H2O = (S)-eriodictyol + beta-D-glucose. It carries out the reaction apigenin 7-O-beta-D-glucoside + H2O = apigenin + beta-D-glucose. The enzyme catalyses daidzein 7-O-beta-D-glucoside + H2O = daidzein + beta-D-glucose + H(+). It catalyses the reaction genistein 7-O-beta-D-glucoside + H2O = genistein + beta-D-glucose. The catalysed reaction is a beta-D-galactosyl-N-acylsphingosine + H2O = a ceramide + beta-D-galactose.. It carries out the reaction beta-D-glucosyl-(1&lt;-&gt;1')-N-hexadecanoylsphing-4-enine + H2O = N-hexadecanoylsphing-4-enine + beta-D-glucose. The enzyme catalyses beta-D-galactosyl-(1&lt;-&gt;1')-N-hexadecanoylsphing-4-enine + H2O = beta-D-galactose + N-hexadecanoylsphing-4-enine. It catalyses the reaction beta-D-galactosyl-(1&lt;-&gt;1')-N-hexadecanoylsphinganine + H2O = N-hexadecanoylsphinganine + beta-D-galactose. The catalysed reaction is beta-D-glucosyl-(1&lt;-&gt;1')-N-hexadecanoylsphinganine + H2O = N-hexadecanoylsphinganine + beta-D-glucose. In terms of biological role, broad specificity glycosidase of the intestinal brush border membrane that hydrolyzes lactose, the main sugar in mammalian milk, to produce D-glucose and D-galactose. The mature protein is composed of two domains that catalyze the hydrolysis of beta-glucopyranosides and beta-galactopyranosides, with a preference for hydrophilic aglycones (in lactose and cellobiose) for one domain and hydrophobic aglycones (in phlorizin and glycosylceramides) for the other. The protein is Lactase/phlorizin hydrolase of Rattus norvegicus (Rat).